Consider the following 323-residue polypeptide: o-succinylbenzoate synthase (323 aa).

The active-site Proton donor is lysine 134. Positions 162, 191, and 214 each coordinate Mg(2+). Residue lysine 236 is the Proton acceptor of the active site.

This sequence belongs to the mandelate racemase/muconate lactonizing enzyme family. MenC type 1 subfamily. A divalent metal cation serves as cofactor.

It carries out the reaction (1R,6R)-6-hydroxy-2-succinyl-cyclohexa-2,4-diene-1-carboxylate = 2-succinylbenzoate + H2O. It functions in the pathway quinol/quinone metabolism; 1,4-dihydroxy-2-naphthoate biosynthesis; 1,4-dihydroxy-2-naphthoate from chorismate: step 4/7. It participates in quinol/quinone metabolism; menaquinone biosynthesis. Converts 2-succinyl-6-hydroxy-2,4-cyclohexadiene-1-carboxylate (SHCHC) to 2-succinylbenzoate (OSB). In Photorhabdus laumondii subsp. laumondii (strain DSM 15139 / CIP 105565 / TT01) (Photorhabdus luminescens subsp. laumondii), this protein is o-succinylbenzoate synthase.